A 266-amino-acid chain; its full sequence is Blue copper protein (266 aa).

The signal sequence occupies residues 1–24 (MAYSKILFCFMIGFVGFLPAITMA). 3 Phytocyanin domains span residues 25-56 (TQYL…GDTL), 57-102 (APPP…TVED), and 116-216 (TEYW…TVEG). An N-linked (GlcNAc...) asparagine glycan is attached at asparagine 47. Cu cation is bound at residue histidine 156. N-linked (GlcNAc...) asparagine glycosylation occurs at asparagine 162. Cysteine 169 and cysteine 203 are disulfide-bonded. Cu cation-binding residues include cysteine 197, histidine 202, and glutamine 208. A helical transmembrane segment spans residues 245-265 (ITSPYKMFVGGAVSIWTILTL).

It is found in the membrane. The sequence is that of Blue copper protein from Petunia hybrida (Petunia).